The chain runs to 122 residues: Large ribosomal subunit protein uL18 (122 aa).

A compositionally biased stretch (basic residues) spans 1–19 (MSTLSRKQKTQKRHKRLRR). A disordered region spans residues 1-26 (MSTLSRKQKTQKRHKRLRRNLSGTDQ).

The protein belongs to the universal ribosomal protein uL18 family. In terms of assembly, part of the 50S ribosomal subunit; part of the 5S rRNA/L5/L18/L25 subcomplex. Contacts the 5S and 23S rRNAs.

Its function is as follows. This is one of the proteins that bind and probably mediate the attachment of the 5S RNA into the large ribosomal subunit, where it forms part of the central protuberance. This Prochlorococcus marinus (strain SARG / CCMP1375 / SS120) protein is Large ribosomal subunit protein uL18.